The primary structure comprises 1128 residues: Major DNA-binding protein (1128 aa).

The interval 1104 to 1128 is required for nuclear localization; it reads LGGGGQGSGGRRKRRLATVLPGLEV.

The protein belongs to the herpesviridae major DNA-binding protein family. Homooligomers. Forms double-helical filaments necessary for the formation of replication compartments within the host nucleus. Interacts with the origin-binding protein. Interacts with the helicase primase complex; this interaction stimulates primer synthesis activity of the helicase-primase complex. Interacts with the DNA polymerase. Interacts with the alkaline exonuclease; this interaction increases its nuclease processivity.

It is found in the virion tegument. Its subcellular location is the host nucleus. In terms of biological role, plays several crucial roles in viral infection. Participates in the opening of the viral DNA origin to initiate replication by interacting with the origin-binding protein. May disrupt loops, hairpins and other secondary structures present on ssDNA to reduce and eliminate pausing of viral DNA polymerase at specific sites during elongation. Promotes viral DNA recombination by performing strand-transfer, characterized by the ability to transfer a DNA strand from a linear duplex to a complementary single-stranded DNA circle. Can also catalyze the renaturation of complementary single strands. Additionally, reorganizes the host cell nucleus, leading to the formation of prereplicative sites and replication compartments. This process is driven by the protein which can form double-helical filaments in the absence of DNA. This Homo sapiens (Human) protein is Major DNA-binding protein.